The following is a 146-amino-acid chain: Benzoylsuccinyl-CoA thiolase subunit BbsA (146 aa).

Cysteine 42, cysteine 45, cysteine 55, and cysteine 58 together coordinate Zn(2+).

The protein belongs to the BbsA family. Heterotetramer composed of two BbsA subunits and two BbsB subunits. Both BbsA and BbsB are essential for enzymatic activity.

It catalyses the reaction (S)-2-benzoylsuccinyl-CoA + CoA = benzoyl-CoA + succinyl-CoA. It functions in the pathway xenobiotic degradation; toluene degradation. In terms of biological role, component of the BbsAB thiolase complex, which catalyzes the thiolytic cleavage of (S)-2-benzoylsuccinyl-CoA to succinyl-CoA and benzoyl-CoA, the final step of anaerobic toluene metabolism. The BbsA subunit critically contributes to an induced-fit process for productive binding of a CoA substrate into the active site of BbsB. The chain is Benzoylsuccinyl-CoA thiolase subunit BbsA from Geobacter metallireducens (strain ATCC 53774 / DSM 7210 / GS-15).